Here is a 130-residue protein sequence, read N- to C-terminus: Larval cuticle protein 1 (130 aa).

An N-terminal signal peptide occupies residues 1-16; sequence MFKFVMICAVLGLAVA. In terms of domain architecture, Chitin-binding type R&amp;R spans 43–104; the sequence is ADGFDSSLHT…PSGAWIPTPP (62 aa).

Functionally, component of the larval cuticle. This chain is Larval cuticle protein 1 (Lcp1), found in Drosophila melanogaster (Fruit fly).